The primary structure comprises 215 residues: Probable GTP-binding protein EngB (215 aa).

The 185-residue stretch at G31 to V215 folds into the EngB-type G domain. Residues G39–S46, G66–E70, D93–G96, T160–D163, and T194–S196 each bind GTP. S46 and T68 together coordinate Mg(2+).

Belongs to the TRAFAC class TrmE-Era-EngA-EngB-Septin-like GTPase superfamily. EngB GTPase family. Mg(2+) serves as cofactor.

Functionally, necessary for normal cell division and for the maintenance of normal septation. This chain is Probable GTP-binding protein EngB, found in Bartonella quintana (strain Toulouse) (Rochalimaea quintana).